A 373-amino-acid chain; its full sequence is MAAFQIANKTVGKDAPVFIIAEAGINHDGKLDQAFALIDAAAEAGADAVKFQMFQADRMYQKDPGLYKTAAGKDVSIFSLVQSMEMPAEWILPLLDYCREKQVIFLSTVCDEGSADLLQSTSPSAFKIASYEINHLPLLKYVARLNRPMIFSTAGAEISDVHEAWRTIRAEGNNQIAIMHCVAKYPAPPEYSNLSVIPMLAAAFPEAVIGFSDHSEHPTEAPCAAVRLGAKLIEKHFTIDKNLPGADHSFALNPDELKEMVDGIRKTEAELKQGITKPVSEKLLGSSYKTTTAIEGEIRNFAYRGIFTTAPIQKGEAFSEDNIAVLRPGQKPQGLHPRFFELLTSGVRAVRDIPADTGIVWDDILLKDSPFHE.

The 63-residue stretch at G305–K367 folds into the AFP-like domain.

Its pathway is spore coat biogenesis; spore coat polysaccharide biosynthesis. This chain is Spore coat polysaccharide biosynthesis protein SpsE (spsE), found in Bacillus subtilis (strain 168).